A 157-amino-acid chain; its full sequence is Cyclic pyranopterin monophosphate synthase (157 aa).

Residues 74-76 (MCH) and 111-112 (ME) contribute to the substrate site. Asp126 is a catalytic residue.

Belongs to the MoaC family. As to quaternary structure, homohexamer; trimer of dimers.

It carries out the reaction (8S)-3',8-cyclo-7,8-dihydroguanosine 5'-triphosphate = cyclic pyranopterin phosphate + diphosphate. The protein operates within cofactor biosynthesis; molybdopterin biosynthesis. In terms of biological role, catalyzes the conversion of (8S)-3',8-cyclo-7,8-dihydroguanosine 5'-triphosphate to cyclic pyranopterin monophosphate (cPMP). The sequence is that of Cyclic pyranopterin monophosphate synthase from Carboxydothermus hydrogenoformans (strain ATCC BAA-161 / DSM 6008 / Z-2901).